Reading from the N-terminus, the 292-residue chain is Shikimate dehydrogenase (NADP(+)) (292 aa).

Shikimate contacts are provided by residues 25–27 (SKS) and T72. The Proton acceptor role is filled by K76. The shikimate site is built by N97 and D113. NADP(+) contacts are provided by residues 137-141 (GAGGA), 161-166 (NRTQSK), and M230. Y232 serves as a coordination point for shikimate. G254 contacts NADP(+).

It belongs to the shikimate dehydrogenase family. Homodimer.

It catalyses the reaction shikimate + NADP(+) = 3-dehydroshikimate + NADPH + H(+). It functions in the pathway metabolic intermediate biosynthesis; chorismate biosynthesis; chorismate from D-erythrose 4-phosphate and phosphoenolpyruvate: step 4/7. Its function is as follows. Involved in the biosynthesis of the chorismate, which leads to the biosynthesis of aromatic amino acids. Catalyzes the reversible NADPH linked reduction of 3-dehydroshikimate (DHSA) to yield shikimate (SA). This chain is Shikimate dehydrogenase (NADP(+)), found in Shewanella sp. (strain ANA-3).